We begin with the raw amino-acid sequence, 399 residues long: L-methionine gamma-lyase (399 aa).

Residues 59 to 61 (YTR) and 89 to 90 (GI) contribute to the pyridoxal 5'-phosphate site. Tyr-114 contributes to the substrate binding site. Residue 209–211 (SAT) coordinates pyridoxal 5'-phosphate. Residue Lys-212 is modified to N6-(pyridoxal phosphate)lysine. Arg-376 contributes to the substrate binding site.

It belongs to the trans-sulfuration enzymes family. L-methionine gamma-lyase subfamily. In terms of assembly, homotetramer; dimer of active dimers. It depends on pyridoxal 5'-phosphate as a cofactor.

The enzyme catalyses L-methionine + H2O = methanethiol + 2-oxobutanoate + NH4(+). The catalysed reaction is L-homocysteine + H2O = 2-oxobutanoate + hydrogen sulfide + NH4(+) + H(+). Functionally, catalyzes the alpha,gamma-elimination of L-methionine to produce methanethiol, 2-oxobutanoate and ammonia; methanethiol (methyl mercaptan) is considered to be one of the main causes of the oral malodor in periodontal disease and may also play a role in the pathogenicity of P.gingivalis in that disease. Is also able to catalyze the alpha,gamma-elimination of L-homocysteine. In Porphyromonas gingivalis (strain ATCC BAA-308 / W83), this protein is L-methionine gamma-lyase.